A 571-amino-acid chain; its full sequence is Proline-rich protein 35 (571 aa).

Disordered stretches follow at residues 1-27 (MSRE…PHYI), 79-187 (GSTT…EGSV), 286-402 (APVS…GSPE), and 476-571 (GPQA…GAEV). The span at 16 to 26 (ARSRKPKKPHY) shows a compositional bias: basic residues. The segment covering 165–175 (GMGGDPRGVGA) has biased composition (gly residues). A compositionally biased stretch (basic and acidic residues) spans 316-336 (TPRDPGQEGELERAAQSDPRR). Polar residues predominate over residues 351-367 (PSLTRFCSRSSLPTGSS). Residues 380–399 (PETPGPEGPLPLQPRGPVPG) are compositionally biased toward pro residues.

The chain is Proline-rich protein 35 (PRR35) from Homo sapiens (Human).